We begin with the raw amino-acid sequence, 359 residues long: Holliday junction branch migration complex subunit RuvB (359 aa).

Residues 1-22 (MAIVSSNAEPSKGAPRPKPSRV) form a disordered region. The large ATPase domain (RuvB-L) stretch occupies residues 13 to 204 (GAPRPKPSRV…FGLIQRLEFY (192 aa)). Residues L43, R44, G85, K88, T89, T90, R194, Y204, and R241 each contribute to the ATP site. Mg(2+) is bound at residue T89. The small ATPAse domain (RuvB-S) stretch occupies residues 205-276 (GQEDLQAIVM…LVDEALTLHR (72 aa)). Residues 279 to 359 (GKGLDASDRR…GWPADEGDAA (81 aa)) are head domain (RuvB-H). DNA-binding residues include R334 and R339.

It belongs to the RuvB family. In terms of assembly, homohexamer. Forms an RuvA(8)-RuvB(12)-Holliday junction (HJ) complex. HJ DNA is sandwiched between 2 RuvA tetramers; dsDNA enters through RuvA and exits via RuvB. An RuvB hexamer assembles on each DNA strand where it exits the tetramer. Each RuvB hexamer is contacted by two RuvA subunits (via domain III) on 2 adjacent RuvB subunits; this complex drives branch migration. In the full resolvosome a probable DNA-RuvA(4)-RuvB(12)-RuvC(2) complex forms which resolves the HJ.

Its subcellular location is the cytoplasm. The catalysed reaction is ATP + H2O = ADP + phosphate + H(+). In terms of biological role, the RuvA-RuvB-RuvC complex processes Holliday junction (HJ) DNA during genetic recombination and DNA repair, while the RuvA-RuvB complex plays an important role in the rescue of blocked DNA replication forks via replication fork reversal (RFR). RuvA specifically binds to HJ cruciform DNA, conferring on it an open structure. The RuvB hexamer acts as an ATP-dependent pump, pulling dsDNA into and through the RuvAB complex. RuvB forms 2 homohexamers on either side of HJ DNA bound by 1 or 2 RuvA tetramers; 4 subunits per hexamer contact DNA at a time. Coordinated motions by a converter formed by DNA-disengaged RuvB subunits stimulates ATP hydrolysis and nucleotide exchange. Immobilization of the converter enables RuvB to convert the ATP-contained energy into a lever motion, pulling 2 nucleotides of DNA out of the RuvA tetramer per ATP hydrolyzed, thus driving DNA branch migration. The RuvB motors rotate together with the DNA substrate, which together with the progressing nucleotide cycle form the mechanistic basis for DNA recombination by continuous HJ branch migration. Branch migration allows RuvC to scan DNA until it finds its consensus sequence, where it cleaves and resolves cruciform DNA. The protein is Holliday junction branch migration complex subunit RuvB of Synechococcus sp. (strain CC9311).